Here is a 97-residue protein sequence, read N- to C-terminus: Acylphosphatase-2 (97 aa).

A2 is subject to N-acetylalanine. Positions 7–97 (SVDYEVFGTV…LEYSNFSIRY (91 aa)) constitute an Acylphosphatase-like domain. Active-site residues include R22 and N40. S91 is subject to Phosphoserine.

The protein belongs to the acylphosphatase family.

It carries out the reaction an acyl phosphate + H2O = a carboxylate + phosphate + H(+). In terms of biological role, its physiological role is not yet clear. The protein is Acylphosphatase-2 (Acyp2) of Rattus norvegicus (Rat).